The primary structure comprises 222 residues: Triosephosphate isomerase (222 aa).

Substrate is bound at residue 9–11; the sequence is NYK. His-93 functions as the Electrophile in the catalytic mechanism. Catalysis depends on Glu-141, which acts as the Proton acceptor. Residues Ile-146, Gly-181, and 202-203 contribute to the substrate site; that span reads AS.

Belongs to the triosephosphate isomerase family. Homotetramer; dimer of dimers.

The protein resides in the cytoplasm. It catalyses the reaction D-glyceraldehyde 3-phosphate = dihydroxyacetone phosphate. Its pathway is carbohydrate biosynthesis; gluconeogenesis. It participates in carbohydrate degradation; glycolysis; D-glyceraldehyde 3-phosphate from glycerone phosphate: step 1/1. Its function is as follows. Involved in the gluconeogenesis. Catalyzes stereospecifically the conversion of dihydroxyacetone phosphate (DHAP) to D-glyceraldehyde-3-phosphate (G3P). The sequence is that of Triosephosphate isomerase from Methanosarcina barkeri (strain Fusaro / DSM 804).